Consider the following 492-residue polypeptide: Nuclear hormone receptor family member nhr-4 (492 aa).

Residues 47-122 (RLICDVCGDV…VGMNPDSVQN (76 aa)) constitute a DNA-binding region (nuclear receptor). 2 consecutive NR C4-type zinc fingers follow at residues 50–70 (CDVC…CNGC) and 86–110 (CRFG…LKKC). The disordered stretch occupies residues 121–143 (QNERDRNAKNGGMGGPMSSPTQS). Residues 215–481 (MDFSIHSAVL…ELIQATHKTT (267 aa)) form the NR LBD domain.

The protein belongs to the nuclear hormone receptor family.

It localises to the nucleus. Functionally, orphan nuclear receptor. In Caenorhabditis elegans, this protein is Nuclear hormone receptor family member nhr-4 (nhr-4).